Here is a 400-residue protein sequence, read N- to C-terminus: Elongation factor Tu 2 (400 aa).

Residues 10–209 (KPHLNIGTIG…AVDSYIPLPQ (200 aa)) enclose the tr-type G domain. The G1 stretch occupies residues 19-26 (GHIDHGKT). GTP is bound at residue 19–26 (GHIDHGKT). Thr-26 is a binding site for Mg(2+). Residues 60-64 (GITIN) form a G2 region. The G3 stretch occupies residues 81–84 (DCPG). Residues 81–85 (DCPGH) and 136–139 (NKID) each bind GTP. Positions 136–139 (NKID) are G4. A G5 region spans residues 174–176 (SAL).

It belongs to the TRAFAC class translation factor GTPase superfamily. Classic translation factor GTPase family. EF-Tu/EF-1A subfamily. In terms of assembly, monomer.

It localises to the cytoplasm. The enzyme catalyses GTP + H2O = GDP + phosphate + H(+). GTP hydrolase that promotes the GTP-dependent binding of aminoacyl-tRNA to the A-site of ribosomes during protein biosynthesis. This Syntrophomonas wolfei subsp. wolfei (strain DSM 2245B / Goettingen) protein is Elongation factor Tu 2.